We begin with the raw amino-acid sequence, 150 residues long: Ribonuclease pancreatic delta-type (150 aa).

Residues methionine 1–glycine 25 form the signal peptide. Residue arginine 35 participates in substrate binding. Catalysis depends on histidine 37, which acts as the Proton acceptor. Cystine bridges form between cysteine 51–cysteine 110, cysteine 65–cysteine 121, cysteine 83–cysteine 136, and cysteine 90–cysteine 98. Residues lysine 66–threonine 70 and lysine 91 contribute to the substrate site. Histidine 145 serves as the catalytic Proton donor.

Belongs to the pancreatic ribonuclease family. Monomer.

It is found in the secreted. The enzyme catalyses an [RNA] containing cytidine + H2O = an [RNA]-3'-cytidine-3'-phosphate + a 5'-hydroxy-ribonucleotide-3'-[RNA].. It catalyses the reaction an [RNA] containing uridine + H2O = an [RNA]-3'-uridine-3'-phosphate + a 5'-hydroxy-ribonucleotide-3'-[RNA].. In terms of biological role, endonuclease that catalyzes the cleavage of RNA on the 3' side of pyrimidine nucleotides. Acts on single-stranded and double-stranded RNA. In Rattus tiomanicus (Malayan field rat), this protein is Ribonuclease pancreatic delta-type.